The sequence spans 389 residues: 8-amino-7-oxononanoate synthase (389 aa).

R31 is a binding site for substrate. 109 to 110 (GY) is a binding site for pyridoxal 5'-phosphate. H134 contacts substrate. Pyridoxal 5'-phosphate is bound by residues S180, 205 to 208 (DEAH), and 236 to 239 (TLSK). The residue at position 239 (K239) is an N6-(pyridoxal phosphate)lysine. T349 lines the substrate pocket.

It belongs to the class-II pyridoxal-phosphate-dependent aminotransferase family. BioF subfamily. Homodimer. Pyridoxal 5'-phosphate is required as a cofactor.

The catalysed reaction is 6-carboxyhexanoyl-[ACP] + L-alanine + H(+) = (8S)-8-amino-7-oxononanoate + holo-[ACP] + CO2. The protein operates within cofactor biosynthesis; biotin biosynthesis. Its function is as follows. Catalyzes the decarboxylative condensation of pimeloyl-[acyl-carrier protein] and L-alanine to produce 8-amino-7-oxononanoate (AON), [acyl-carrier protein], and carbon dioxide. The sequence is that of 8-amino-7-oxononanoate synthase from Mycobacterium ulcerans (strain Agy99).